The primary structure comprises 149 residues: Arginine regulator (149 aa).

This sequence belongs to the ArgR family.

Its subcellular location is the cytoplasm. The protein operates within amino-acid degradation; L-arginine degradation via ADI pathway. Functionally, regulates the transcription of the arc operon, involved in arginine catabolism. The sequence is that of Arginine regulator (argR1) from Bacillus thuringiensis subsp. konkukian (strain 97-27).